Here is a 398-residue protein sequence, read N- to C-terminus: Lipase member K (398 aa).

The signal sequence occupies residues 1-19; it reads MWWLLATTCCVLLSGPIDG. The 300-residue stretch at 78 to 377 folds into the AB hydrolase-1 domain; that stretch reads VVYLQHGLIA…HYNHMDFYLG (300 aa). Serine 171 functions as the Nucleophile in the catalytic mechanism. Cysteines 245 and 254 form a disulfide. Residues asparagine 270 and asparagine 326 are each glycosylated (N-linked (GlcNAc...) asparagine). Active-site charge relay system residues include aspartate 342 and histidine 371.

The protein belongs to the AB hydrolase superfamily. Lipase family.

Its subcellular location is the secreted. Plays a highly specific role in the last step of keratinocyte differentiation. May have an essential function in lipid metabolism of the most differentiated epidermal layers. The chain is Lipase member K (Lipk) from Mus musculus (Mouse).